A 252-amino-acid chain; its full sequence is Imidazole glycerol phosphate synthase subunit HisF (252 aa).

Catalysis depends on residues Asp11 and Asp130.

Belongs to the HisA/HisF family. In terms of assembly, heterodimer of HisH and HisF.

It is found in the cytoplasm. The catalysed reaction is 5-[(5-phospho-1-deoxy-D-ribulos-1-ylimino)methylamino]-1-(5-phospho-beta-D-ribosyl)imidazole-4-carboxamide + L-glutamine = D-erythro-1-(imidazol-4-yl)glycerol 3-phosphate + 5-amino-1-(5-phospho-beta-D-ribosyl)imidazole-4-carboxamide + L-glutamate + H(+). The protein operates within amino-acid biosynthesis; L-histidine biosynthesis; L-histidine from 5-phospho-alpha-D-ribose 1-diphosphate: step 5/9. IGPS catalyzes the conversion of PRFAR and glutamine to IGP, AICAR and glutamate. The HisF subunit catalyzes the cyclization activity that produces IGP and AICAR from PRFAR using the ammonia provided by the HisH subunit. This is Imidazole glycerol phosphate synthase subunit HisF from Syntrophomonas wolfei subsp. wolfei (strain DSM 2245B / Goettingen).